A 952-amino-acid chain; its full sequence is Ubiquitin carboxyl-terminal hydrolase 15 (952 aa).

Position 2 is an N-acetylalanine (Ala-2). The interval 2–223 (AEGGAADLDI…KNEDGTWPRG (222 aa)) is mediates interaction with SART3. The DUSP domain occupies 7–118 (ADLDIQRSDI…GQEPIARKVV (112 aa)). Phosphothreonine is present on Thr-226. The region spanning 260–904 (CGLSNLGNTC…AAYVLFYQRQ (645 aa)) is the USP domain. Cys-269 acts as the Nucleophile in catalysis. Phosphothreonine is present on Thr-573. The tract at residues 598-666 (TEGSLHCCKD…GDNDSENGLC (69 aa)) is disordered. The segment covering 627–644 (METDEPDDESSQDQELPS) has biased composition (acidic residues). Catalysis depends on His-862, which acts as the Proton acceptor. Positions 923–952 (SAATGIPLESDEDSNDNDNDIENENCMHTN) are disordered. Acidic residues predominate over residues 931–945 (ESDEDSNDNDNDIEN). Phosphoserine is present on residues Ser-932 and Ser-936.

This sequence belongs to the peptidase C19 family. In terms of assembly, a homodimer structure has been reported; however it is unclear whether the protein form a homodimer in vivo. Identified in a complex with the COP9 signalosome complex (CSN). Interacts with SMAD1, SMAD2 and SMAD3; the interaction is direct. Forms a complex with SMURF2 and SMAD7. Interacts with TGFBR1. Interacts with SART3; the interaction is direct. May interact with RNF20 and RNF40. May interact with PRKN. Interacts with INCA1. Phosphorylated. Phosphorylation protects against ubiquitination and subsequent degradation by the proteasome. Post-translationally, ubiquitinated, leading to degradation by the proteasome.

The protein resides in the cytoplasm. It is found in the nucleus. Its subcellular location is the mitochondrion. The catalysed reaction is Thiol-dependent hydrolysis of ester, thioester, amide, peptide and isopeptide bonds formed by the C-terminal Gly of ubiquitin (a 76-residue protein attached to proteins as an intracellular targeting signal).. Hydrolase that removes conjugated ubiquitin from target proteins and regulates various pathways such as the TGF-beta receptor signaling, NF-kappa-B and RNF41/NRDP1-PRKN pathways. Acts as a key regulator of TGF-beta receptor signaling pathway, but the precise mechanism is still unclear: according to a report, acts by promoting deubiquitination of monoubiquitinated R-SMADs (SMAD1, SMAD2 and/or SMAD3), thereby alleviating inhibition of R-SMADs and promoting activation of TGF-beta target genes. According to another reports, regulates the TGF-beta receptor signaling pathway by mediating deubiquitination and stabilization of TGFBR1, leading to an enhanced TGF-beta signal. Able to mediate deubiquitination of monoubiquitinated substrates, 'Lys-27'-, 'Lys-48'- and 'Lys-63'-linked polyubiquitin chains. May also regulate gene expression and/or DNA repair through the deubiquitination of histone H2B. Acts as an inhibitor of mitophagy by counteracting the action of parkin (PRKN): hydrolyzes cleavage of 'Lys-48'- and 'Lys-63'-linked polyubiquitin chains attached by parkin on target proteins such as MFN2, thereby reducing parkin's ability to drive mitophagy. Acts as an associated component of COP9 signalosome complex (CSN) and regulates different pathways via this association: regulates NF-kappa-B by mediating deubiquitination of NFKBIA and deubiquitinates substrates bound to VCP. Involved in endosome organization by mediating deubiquitination of SQSTM1: ubiquitinated SQSTM1 forms a molecular bridge that restrains cognate vesicles in the perinuclear region and its deubiquitination releases target vesicles for fast transport into the cell periphery. Acts as a negative regulator of antifungal immunity by mediating 'Lys-27'-linked deubiquitination of CARD9, thereby inactivating CARD9. This is Ubiquitin carboxyl-terminal hydrolase 15 (USP15) from Bos taurus (Bovine).